The following is a 188-amino-acid chain: UPF0157 protein VC_A0354 (188 aa).

The protein belongs to the UPF0157 (GrpB) family.

In Vibrio cholerae serotype O1 (strain ATCC 39315 / El Tor Inaba N16961), this protein is UPF0157 protein VC_A0354.